We begin with the raw amino-acid sequence, 196 residues long: MRENRGWEVFSLLTSTEVYEERVVEVPEDVQLTIEGDSFRGYTLKAVGPKGENTRYLKYRGVFIEVGDGKVRVYTTSPKKKHKAMVGTFAGHIENLITGVKEGFEYHLKVVYAHFPIKVRVEGNEVIIENFIGEKHPRRAKIVGRAQVEISGQDIYVRGIDIEECGQTAANLEQATKIKRKDPRVFQDGIYIVKKP.

This sequence belongs to the universal ribosomal protein uL6 family. In terms of assembly, part of the 50S ribosomal subunit.

This protein binds to the 23S rRNA, and is important in its secondary structure. It is located near the subunit interface in the base of the L7/L12 stalk, and near the tRNA binding site of the peptidyltransferase center. The polypeptide is Large ribosomal subunit protein uL6 (Archaeoglobus fulgidus (strain ATCC 49558 / DSM 4304 / JCM 9628 / NBRC 100126 / VC-16)).